Here is an 80-residue protein sequence, read N- to C-terminus: Sulfur carrier protein TusA (80 aa).

C17 functions as the Cysteine persulfide intermediate in the catalytic mechanism.

The protein belongs to the sulfur carrier protein TusA family.

It is found in the cytoplasm. Sulfur carrier protein which probably makes part of a sulfur-relay system. This chain is Sulfur carrier protein TusA, found in Pseudomonas putida (strain ATCC 47054 / DSM 6125 / CFBP 8728 / NCIMB 11950 / KT2440).